The chain runs to 402 residues: Pyridinium-3,5-bisthiocarboxylic acid mononucleotide nickel insertion protein (402 aa).

It belongs to the LarC family.

The catalysed reaction is Ni(II)-pyridinium-3,5-bisthiocarboxylate mononucleotide = pyridinium-3,5-bisthiocarboxylate mononucleotide + Ni(2+). Its function is as follows. Involved in the biosynthesis of a nickel-pincer cofactor ((SCS)Ni(II) pincer complex). Binds Ni(2+), and functions in nickel delivery to pyridinium-3,5-bisthiocarboxylic acid mononucleotide (P2TMN), to form the mature cofactor. Is thus probably required for the activation of nickel-pincer cofactor-dependent enzymes. This chain is Pyridinium-3,5-bisthiocarboxylic acid mononucleotide nickel insertion protein, found in Desulfitobacterium hafniense (strain DSM 10664 / DCB-2).